Here is a 225-residue protein sequence, read N- to C-terminus: Helicostatins (225 aa).

The first 18 residues, Met1–Cys18, serve as a signal peptide directing secretion. A propeptide spanning residues Ala19–Ala48 is cleaved from the precursor. A leucine amide mark is found at Leu58, Leu79, and Leu90. Residues Ser94–Glu127 constitute a propeptide that is removed on maturation. The residue at position 137 (Leu137) is a Leucine amide. The propeptide occupies Phe141–Glu149. A leucine amide mark is found at Leu159, Leu170, Leu181, Leu192, and Leu206. A disordered region spans residues Gly205–Val225. Residues Ser210–Val225 constitute a propeptide that is removed on maturation. Acidic residues predominate over residues Val214–Val225.

This sequence belongs to the allatostatin family. Highly expressed in the CNS and gut of larvae. Also expressed in the cells of the larval brain and ventral nerve cord and in endocrine cells of the midgut.

It is found in the secreted. Functionally, may act as a neurotransmitter or neuromodulator. This is Helicostatins from Helicoverpa armigera (Cotton bollworm).